The primary structure comprises 159 residues: MLKSLLSLVTSGNKEKKKKRSSAGLTGHAPPAADSSFFSEADSSIMNVTSITLPTVSGRDDSIQSTSPVLGYSPFGFVERKNRAASFDFCLSDKPQSDVVVHRRSLQPSTPTPNQSAESSFIENIFDSPGQRNRLHSMIEEKIYEAGSGSPQKFTGRVS.

Residues 9–36 (VTSGNKEKKKKRSSAGLTGHAPPAADSS) form a disordered region.

This is an uncharacterized protein from Caenorhabditis elegans.